A 115-amino-acid chain; its full sequence is Large ribosomal subunit protein bL19 (115 aa).

This sequence belongs to the bacterial ribosomal protein bL19 family.

This protein is located at the 30S-50S ribosomal subunit interface and may play a role in the structure and function of the aminoacyl-tRNA binding site. The polypeptide is Large ribosomal subunit protein bL19 (Francisella philomiragia subsp. philomiragia (strain ATCC 25017 / CCUG 19701 / FSC 153 / O#319-036)).